The primary structure comprises 215 residues: MKAYTVEQGIVAPLDRANVDTDLIIPKQFLKSIKRTGFGDNLFDELRYLDEGYPGQDNSVRPKNPDFVLNQPRYQGATVLIARTNFGCGSSREHAPWALNEYGFRTVIAPSFADIFFNNCFKNGMLPVILPEDIVDQLFKECAAQEGYQLTIDLAAQEVRTPTGEAFKFEVDPFRKHCLLNGLDDIGLTLQNADAIRAYEEKTKQVRPWVFQEIN.

Belongs to the LeuD family. LeuD type 1 subfamily. As to quaternary structure, heterodimer of LeuC and LeuD.

It catalyses the reaction (2R,3S)-3-isopropylmalate = (2S)-2-isopropylmalate. It functions in the pathway amino-acid biosynthesis; L-leucine biosynthesis; L-leucine from 3-methyl-2-oxobutanoate: step 2/4. Functionally, catalyzes the isomerization between 2-isopropylmalate and 3-isopropylmalate, via the formation of 2-isopropylmaleate. In Acinetobacter baumannii (strain AB307-0294), this protein is 3-isopropylmalate dehydratase small subunit.